A 351-amino-acid chain; its full sequence is Nicotinate-nucleotide--dimethylbenzimidazole phosphoribosyltransferase (351 aa).

Glu-317 serves as the catalytic Proton acceptor.

The protein belongs to the CobT family.

The catalysed reaction is 5,6-dimethylbenzimidazole + nicotinate beta-D-ribonucleotide = alpha-ribazole 5'-phosphate + nicotinate + H(+). The protein operates within nucleoside biosynthesis; alpha-ribazole biosynthesis; alpha-ribazole from 5,6-dimethylbenzimidazole: step 1/2. In terms of biological role, catalyzes the synthesis of alpha-ribazole-5'-phosphate from nicotinate mononucleotide (NAMN) and 5,6-dimethylbenzimidazole (DMB). This is Nicotinate-nucleotide--dimethylbenzimidazole phosphoribosyltransferase from Pseudomonas aeruginosa (strain ATCC 15692 / DSM 22644 / CIP 104116 / JCM 14847 / LMG 12228 / 1C / PRS 101 / PAO1).